We begin with the raw amino-acid sequence, 81 residues long: UPF0410 protein YwzA (81 aa).

A run of 3 helical transmembrane segments spans residues 1–21 (MSFL…SLFV), 27–47 (GGII…HGLL), and 56–76 (GFAI…VSLL).

The protein belongs to the UPF0410 family.

Its subcellular location is the cell membrane. The chain is UPF0410 protein YwzA (ywzA) from Bacillus subtilis (strain 168).